The following is a 160-amino-acid chain: V-type proton ATPase subunit c (160 aa).

Over 1 to 8 (MTELCPVY) the chain is Vacuolar. Residues 9 to 31 (APFFGAIGCASAIIFTSLGAAYG) traverse the membrane as a helical segment. Residues 32 to 53 (TAKSGVGICATCVLRPDLLFKN) lie on the Cytoplasmic side of the membrane. The helical transmembrane segment at 54-74 (IVPVIMAGIIAIYGLVVSVLV) threads the bilayer. The Vacuolar segment spans residues 75–90 (CYSLGQKQALYTGFIQ). Residues 91–112 (LGAGLSVGLSGLAAGFAIGIVG) form a helical membrane-spanning segment. At 113-124 (DAGVRGSSQQPR) the chain is on the cytoplasmic side. The helical transmembrane segment at 125–150 (LFVGMILILIFAEVLGLYGLIVALLL) threads the bilayer. Topologically, residues 151–160 (NSRATQDVVC) are vacuolar.

This sequence belongs to the V-ATPase proteolipid subunit family. In terms of assembly, V-ATPase is a heteromultimeric enzyme composed of a peripheral catalytic V1 complex (components A to H) attached to an integral membrane V0 proton pore complex (components: a, c, c', c'', d, e, f and VOA1). The decameric c-ring forms the proton-conducting pore, and is composed of eight proteolipid subunits c, one subunit c' and one subunit c''.

The protein localises to the vacuole membrane. Functionally, proton-conducting pore forming subunit of the V0 complex of vacuolar(H+)-ATPase (V-ATPase), a multisubunit enzyme composed of a peripheral complex (V1) that hydrolyzes ATP and a membrane integral complex (V0) that translocates protons. V-ATPase is responsible for acidifying and maintaining the pH of intracellular compartments. The polypeptide is V-type proton ATPase subunit c (VMA3) (Saccharomyces cerevisiae (strain ATCC 204508 / S288c) (Baker's yeast)).